We begin with the raw amino-acid sequence, 892 residues long: Alanine--tRNA ligase (892 aa).

Residues His580, His584, Cys682, and His686 each coordinate Zn(2+).

Belongs to the class-II aminoacyl-tRNA synthetase family. Zn(2+) serves as cofactor.

Its subcellular location is the cytoplasm. It catalyses the reaction tRNA(Ala) + L-alanine + ATP = L-alanyl-tRNA(Ala) + AMP + diphosphate. In terms of biological role, catalyzes the attachment of alanine to tRNA(Ala) in a two-step reaction: alanine is first activated by ATP to form Ala-AMP and then transferred to the acceptor end of tRNA(Ala). Also edits incorrectly charged Ser-tRNA(Ala) and Gly-tRNA(Ala) via its editing domain. This is Alanine--tRNA ligase from Salinispora tropica (strain ATCC BAA-916 / DSM 44818 / JCM 13857 / NBRC 105044 / CNB-440).